A 314-amino-acid chain; its full sequence is Acetyl-coenzyme A carboxylase carboxyl transferase subunit beta, chloroplastic (314 aa).

A CoA carboxyltransferase N-terminal domain is found at 47–314 (LWTRCDNCEN…APWKEKNNQV (268 aa)). Zn(2+) contacts are provided by C51, C54, C70, and C73. The C4-type zinc-finger motif lies at 51–73 (CDNCENMLYIKFLKQNKGVCEEC).

Belongs to the AccD/PCCB family. In terms of assembly, acetyl-CoA carboxylase is a heterohexamer composed of biotin carboxyl carrier protein, biotin carboxylase and 2 subunits each of ACCase subunit alpha and ACCase plastid-coded subunit beta (accD). Zn(2+) is required as a cofactor.

Its subcellular location is the plastid. The protein localises to the chloroplast stroma. The enzyme catalyses N(6)-carboxybiotinyl-L-lysyl-[protein] + acetyl-CoA = N(6)-biotinyl-L-lysyl-[protein] + malonyl-CoA. Its pathway is lipid metabolism; malonyl-CoA biosynthesis; malonyl-CoA from acetyl-CoA: step 1/1. Component of the acetyl coenzyme A carboxylase (ACC) complex. Biotin carboxylase (BC) catalyzes the carboxylation of biotin on its carrier protein (BCCP) and then the CO(2) group is transferred by the transcarboxylase to acetyl-CoA to form malonyl-CoA. The chain is Acetyl-coenzyme A carboxylase carboxyl transferase subunit beta, chloroplastic from Angiopteris lygodiifolia (Turnip fern).